Reading from the N-terminus, the 219-residue chain is Suppressor-of-stellate-like protein (219 aa).

A disordered region spans residues 194–219 (SAESPPIKVESSVSKSPSWLRNVPNF). The span at 204–219 (SSVSKSPSWLRNVPNF) shows a compositional bias: polar residues.

Belongs to the casein kinase 2 subunit beta family.

The chain is Suppressor-of-stellate-like protein (Ssl) from Drosophila melanogaster (Fruit fly).